Consider the following 248-residue polypeptide: Ubiquinone/menaquinone biosynthesis C-methyltransferase UbiE (248 aa).

S-adenosyl-L-methionine is bound by residues Ser-68 and Asp-92.

This sequence belongs to the class I-like SAM-binding methyltransferase superfamily. MenG/UbiE family.

It carries out the reaction a 2-demethylmenaquinol + S-adenosyl-L-methionine = a menaquinol + S-adenosyl-L-homocysteine + H(+). The catalysed reaction is a 2-methoxy-6-(all-trans-polyprenyl)benzene-1,4-diol + S-adenosyl-L-methionine = a 5-methoxy-2-methyl-3-(all-trans-polyprenyl)benzene-1,4-diol + S-adenosyl-L-homocysteine + H(+). The protein operates within quinol/quinone metabolism; menaquinone biosynthesis; menaquinol from 1,4-dihydroxy-2-naphthoate: step 2/2. Its pathway is cofactor biosynthesis; ubiquinone biosynthesis. In terms of biological role, methyltransferase required for the conversion of demethylmenaquinol (DMKH2) to menaquinol (MKH2) and the conversion of 2-polyprenyl-6-methoxy-1,4-benzoquinol (DDMQH2) to 2-polyprenyl-3-methyl-6-methoxy-1,4-benzoquinol (DMQH2). The protein is Ubiquinone/menaquinone biosynthesis C-methyltransferase UbiE of Rickettsia akari (strain Hartford).